Consider the following 347-residue polypeptide: Calcium homeostasis modulator protein 3 (347 aa).

At 1 to 20 the chain is on the cytoplasmic side; that stretch reads MDRFRMLFQHLQSSSESVMN. Residues 9 to 36 form a central pore region; sequence QHLQSSSESVMNGICLLLAAVTVKIYSS. A helical membrane pass occupies residues 21-36; that stretch reads GICLLLAAVTVKIYSS. Topologically, residues 37–48 are extracellular; the sequence is LDFNCPCLERYN. 2 disulfide bridges follow: cysteine 41–cysteine 126 and cysteine 43–cysteine 157. The helical transmembrane segment at 49–71 threads the bilayer; the sequence is ALYGLGLLLTPPLALFLCGLLVN. Residues 72-98 are Cytoplasmic-facing; the sequence is RQSVLMVEEWRRPAGHRRKDLGIIRYM. Cysteine 99 carries S-palmitoyl cysteine lipidation. Residues 99–124 form a helical membrane-spanning segment; sequence CSSVLQRALAAPLVWILLALLDGKCF. The Extracellular segment spans residues 125 to 176; sequence VCAFSNSVDPEKFLDFANMTPRQVQLFLAKVPCKEDELVKNSPARKAVSRYL. A glycan (N-linked (GlcNAc...) asparagine) is linked at asparagine 142. The helical transmembrane segment at 177–202 threads the bilayer; the sequence is RCLSQAIGWSITLLVIVVAFLARCLR. S-palmitoyl cysteine attachment occurs at residues cysteine 200 and cysteine 204. Residues 203-347 are Cytoplasmic-facing; that stretch reads PCFDQTVFLQ…GTKLCHQLNV (145 aa). The tract at residues 265–290 is disordered; sequence GGIPESQESSEPPELREDRDSGNGKA. The span at 277–286 shows a compositional bias: basic and acidic residues; sequence PELREDRDSG.

This sequence belongs to the CALHM family. In terms of assembly, associates with CALHM1 as a pore-forming subunit in a hetero-hexameric channel complex. Post-translationally, N-glycosylated. In terms of processing, palmitoylated by ZDHHC3 and ZDHHC15. Palmitoylation positively regulates CALHM1:CALHM3 channel conductance. Expressed in taste bud cells.

The protein localises to the basolateral cell membrane. The catalysed reaction is ATP(in) = ATP(out). It carries out the reaction Ca(2+)(in) = Ca(2+)(out). It catalyses the reaction Na(+)(in) = Na(+)(out). The enzyme catalyses K(+)(in) = K(+)(out). The catalysed reaction is chloride(in) = chloride(out). In terms of biological role, pore-forming subunit of gustatory voltage-gated ion channels required for sensory perception of sweet, bitter and umami tastes. With CALHM1 forms a fast-activating voltage-gated ATP-release channel in type II taste bud cells, ATP acting as a neurotransmitter to activate afferent neural gustatory pathways. Acts both as a voltage-gated and calcium-activated ion channel: mediates neuronal excitability in response to membrane depolarization and low extracellular Ca(2+) concentration. Has poor ion selectivity and forms a wide pore (around 14 Angstroms) that mediates permeation of small ions including Ca(2+), Na(+), K(+) and Cl(-), as well as larger ions such as ATP(4-). This Mus musculus (Mouse) protein is Calcium homeostasis modulator protein 3.